The chain runs to 397 residues: Tryptophan synthase beta chain (397 aa).

An N6-(pyridoxal phosphate)lysine modification is found at Lys87.

This sequence belongs to the TrpB family. Tetramer of two alpha and two beta chains. Pyridoxal 5'-phosphate is required as a cofactor.

It carries out the reaction (1S,2R)-1-C-(indol-3-yl)glycerol 3-phosphate + L-serine = D-glyceraldehyde 3-phosphate + L-tryptophan + H2O. It participates in amino-acid biosynthesis; L-tryptophan biosynthesis; L-tryptophan from chorismate: step 5/5. In terms of biological role, the beta subunit is responsible for the synthesis of L-tryptophan from indole and L-serine. This is Tryptophan synthase beta chain from Enterobacter sp. (strain 638).